The following is a 276-amino-acid chain: Large ribosomal subunit protein uL2 (276 aa).

Positions 211–276 (RNRHRGIRPQ…KLIISRRKGK (66 aa)) are disordered. The span at 230–240 (DHPHGGGEGKK) shows a compositional bias: basic and acidic residues.

Belongs to the universal ribosomal protein uL2 family. In terms of assembly, part of the 50S ribosomal subunit. Forms a bridge to the 30S subunit in the 70S ribosome.

Functionally, one of the primary rRNA binding proteins. Required for association of the 30S and 50S subunits to form the 70S ribosome, for tRNA binding and peptide bond formation. It has been suggested to have peptidyltransferase activity; this is somewhat controversial. Makes several contacts with the 16S rRNA in the 70S ribosome. This Campylobacter jejuni subsp. doylei (strain ATCC BAA-1458 / RM4099 / 269.97) protein is Large ribosomal subunit protein uL2.